We begin with the raw amino-acid sequence, 347 residues long: MTIKVAIAGASGYAGGEILRLLLGHPAYASGELEIGALTAASTAGSTLGELMPHIPQLADRVIQDTTAETLAGHDVVFLGLPHGFSAEIALQLGPDVTVIDCAADFRLQNAADWEKFYGSEHQGTWPYGIPEMPGHREALRGAKRVAVPGCFPTGATLALIPAVQAGLIEPDVSVVSITGVSGGGKKASVALLGSETMGSLKAYNTSGKHRHTPEIAQNLGEVSDKPVKVSFTPVLAPLPRGILTTATAPLKEGVTAEQARAVYEEFYAQETFVHVLPEGAQPQTQAVLGSNMCHVQVEIDEEAGKVLVTSAIDNLTKGTAGAAVQCMNLSVGFDEAAGLPQVGVAP.

Cys151 is a catalytic residue.

Belongs to the NAGSA dehydrogenase family. Type 1 subfamily.

It is found in the cytoplasm. It catalyses the reaction N-acetyl-L-glutamate 5-semialdehyde + phosphate + NADP(+) = N-acetyl-L-glutamyl 5-phosphate + NADPH + H(+). The protein operates within amino-acid biosynthesis; L-arginine biosynthesis; N(2)-acetyl-L-ornithine from L-glutamate: step 3/4. Its function is as follows. Catalyzes the NADPH-dependent reduction of N-acetyl-5-glutamyl phosphate to yield N-acetyl-L-glutamate 5-semialdehyde. This chain is N-acetyl-gamma-glutamyl-phosphate reductase, found in Corynebacterium glutamicum (strain R).